The following is a 576-amino-acid chain: Acyl-CoA ligase sidI (576 aa).

A PTS2-type peroxisomal targeting signal motif is present at residues 3-11 (PVTTKTIRP). ATP is bound by residues aspartate 439, arginine 454, and lysine 553.

The protein belongs to the ATP-dependent AMP-binding enzyme family.

It is found in the peroxisome. Its pathway is siderophore biosynthesis. Acyl-CoA ligase; part of the gene cluster that mediates the biosynthesis of at least 11 siderophores, including beauverichelin A, dimerumic acid (DA), Na-dimethyl coprogen (NADC), eleutherazine B, ferricrocin (FC), fusarinine A, fusarinine C (FsC), metachelin A, mevalonolactone, rhodotorulic acid (RA) and tenellin. This cocktail of siderophores for iron metabolism is essential for virulence, and more specifically for the fungal virulence in penetrating through the host cuticle. Siderophore synthesis is also involved in conidial germination under iron-deficient conditions. For biosynthesis of fusarinine C, the transacylase SIDF transfers anhydromevalonyl to N(5)-hydroxyornithine. The required anhydromevalonyl-CoA moiety is derived from mevalonate by CoA ligation and dehydration catalyzed by SIDI and sidH respectively. The sequence is that of Acyl-CoA ligase sidI from Beauveria bassiana (strain ARSEF 2860) (White muscardine disease fungus).